The following is a 309-amino-acid chain: uncharacterized protein (309 aa).

This sequence belongs to the anthranilate phosphoribosyltransferase family.

This is an uncharacterized protein from Aquifex aeolicus (strain VF5).